A 307-amino-acid chain; its full sequence is Elongation factor Ts (307 aa).

Residues 79 to 82 form an involved in Mg(2+) ion dislocation from EF-Tu region; the sequence is TDFV.

It belongs to the EF-Ts family.

The protein localises to the cytoplasm. In terms of biological role, associates with the EF-Tu.GDP complex and induces the exchange of GDP to GTP. It remains bound to the aminoacyl-tRNA.EF-Tu.GTP complex up to the GTP hydrolysis stage on the ribosome. This chain is Elongation factor Ts, found in Sinorhizobium medicae (strain WSM419) (Ensifer medicae).